Consider the following 493-residue polypeptide: ATP synthase subunit beta, chloroplastic (493 aa).

170–177 (GGAGVGKT) is an ATP binding site.

The protein belongs to the ATPase alpha/beta chains family. F-type ATPases have 2 components, CF(1) - the catalytic core - and CF(0) - the membrane proton channel. CF(1) has five subunits: alpha(3), beta(3), gamma(1), delta(1), epsilon(1). CF(0) has four main subunits: a(1), b(1), b'(1) and c(9-12).

The protein localises to the plastid. The protein resides in the chloroplast thylakoid membrane. It carries out the reaction ATP + H2O + 4 H(+)(in) = ADP + phosphate + 5 H(+)(out). Produces ATP from ADP in the presence of a proton gradient across the membrane. The catalytic sites are hosted primarily by the beta subunits. The polypeptide is ATP synthase subunit beta, chloroplastic (Chaetosphaeridium globosum (Charophycean green alga)).